Here is a 480-residue protein sequence, read N- to C-terminus: ATP synthase subunit beta 1 (480 aa).

Residue 154–161 coordinates ATP; sequence GGAGVGKT.

This sequence belongs to the ATPase alpha/beta chains family. F-type ATPases have 2 components, CF(1) - the catalytic core - and CF(0) - the membrane proton channel. CF(1) has five subunits: alpha(3), beta(3), gamma(1), delta(1), epsilon(1). CF(0) has four main subunits: a(1), b(1), b'(1) and c(9-12).

It localises to the cell inner membrane. It carries out the reaction ATP + H2O + 4 H(+)(in) = ADP + phosphate + 5 H(+)(out). In terms of biological role, produces ATP from ADP in the presence of a proton gradient across the membrane. The catalytic sites are hosted primarily by the beta subunits. The sequence is that of ATP synthase subunit beta 1 from Chlorobaculum tepidum (strain ATCC 49652 / DSM 12025 / NBRC 103806 / TLS) (Chlorobium tepidum).